Here is a 34-residue protein sequence, read N- to C-terminus: Leader peptide SpeFL (34 aa).

Residues 1-13 (MENNSRTMPHIRR) form a sensor domain region. The Ornithine recognition loop motif lies at 10 to 16 (HIRRTTH). An L-ornithine-binding site is contributed by arginine 13. The tract at residues 14–34 (TTHIMKFAHRNSFDFHFFNAR) is effector domain.

It belongs to the speF operon leader peptide family. In terms of assembly, binds ornithine in stalled 70S ribosomes, blocking the upper two-thirds of the exit tunnel. Contacts 23S rRNA and ribosomal proteins L4 and L22.

In terms of biological role, a small protein (arrest peptide) encoded upstream of inducible ornithine carboxylase gene (speF) that controls expression of downstream genes (speF and patE) by nascent chain-translational arrest and transcriptional attenuation. In the presence of ornithine a toeprint due to ribosomal arrest can be seen on the speFL transcript. Only L-ornithine (not other tested amino acids) has this effect. It is thought that in the presence of ornithine, ribosomal stalling on speFL prevents binding of Rho transcription termination factor to a downstream rut site allowing transcription of the operon. In the absence of ornithine, ribosomes terminate translation and are recycled, exposing the rut site allowing Rho to bind and prematurely terminate transcription. The presence of a pair of rare Arg codons could slow down translation to prevent polysome accumulation and to expose the rut site to Rho. The protein is Leader peptide SpeFL of Escherichia coli (strain K12).